The following is a 427-amino-acid chain: 3-phosphoshikimate 1-carboxyvinyltransferase (427 aa).

3-phosphoshikimate is bound by residues Lys20, Ser21, and Arg25. Lys20 is a binding site for phosphoenolpyruvate. Phosphoenolpyruvate contacts are provided by Gly92 and Arg120. Ser166, Gln168, Asp312, and Lys339 together coordinate 3-phosphoshikimate. A phosphoenolpyruvate-binding site is contributed by Gln168. Asp312 serves as the catalytic Proton acceptor. Phosphoenolpyruvate-binding residues include Arg343 and Arg385.

Belongs to the EPSP synthase family. Monomer.

Its subcellular location is the cytoplasm. It carries out the reaction 3-phosphoshikimate + phosphoenolpyruvate = 5-O-(1-carboxyvinyl)-3-phosphoshikimate + phosphate. Its pathway is metabolic intermediate biosynthesis; chorismate biosynthesis; chorismate from D-erythrose 4-phosphate and phosphoenolpyruvate: step 6/7. Catalyzes the transfer of the enolpyruvyl moiety of phosphoenolpyruvate (PEP) to the 5-hydroxyl of shikimate-3-phosphate (S3P) to produce enolpyruvyl shikimate-3-phosphate and inorganic phosphate. The protein is 3-phosphoshikimate 1-carboxyvinyltransferase of Streptococcus equi subsp. zooepidemicus (strain H70).